Consider the following 458-residue polypeptide: uncharacterized protein (458 aa).

The protein belongs to the glycerate kinase type-2 family.

This is an uncharacterized protein from Caenorhabditis elegans.